The primary structure comprises 78 residues: Acyl carrier protein (78 aa).

Positions 4–78 constitute a Carrier domain; that stretch reads AQIKEKVYDI…QQAIDYIVKK (75 aa). The residue at position 39 (Ser39) is an O-(pantetheine 4'-phosphoryl)serine.

Belongs to the acyl carrier protein (ACP) family. In terms of processing, 4'-phosphopantetheine is transferred from CoA to a specific serine of apo-ACP by AcpS. This modification is essential for activity because fatty acids are bound in thioester linkage to the sulfhydryl of the prosthetic group.

It is found in the cytoplasm. The protein operates within lipid metabolism; fatty acid biosynthesis. Functionally, carrier of the growing fatty acid chain in fatty acid biosynthesis. The polypeptide is Acyl carrier protein (Chlorobium phaeobacteroides (strain DSM 266 / SMG 266 / 2430)).